A 733-amino-acid chain; its full sequence is Tudor domain-containing protein 3 (733 aa).

The disordered stretch occupies residues 241-281 (TRTFGGGGNAGGNLANPGSSYKSRDTYQRKREEREKPWTEN). Positions 262 to 281 (KSRDTYQRKREEREKPWTEN) are enriched in basic and acidic residues. A UBA domain is found at 290 to 330 (LVDERALRDIMEMGFNREAARQALLDNNNNLEVALNLLLTR). The segment at 333–630 (QPRAAPVEQS…RSGPIKGPRD (298 aa)) is disordered. Residues 346–355 (PRGKGRGKGR) are compositionally biased toward basic residues. A compositionally biased stretch (polar residues) spans 392 to 408 (PSQQDHQTKMNFSNSDQ). The segment covering 420-441 (PRNDGRSQRNDRPPRFQKDGDF) has biased composition (basic and acidic residues). Residues 446-455 (PASSSFSQPQ) are compositionally biased toward polar residues. Residues 456–478 (KWRDGERTGRGGGPERWKNESQD) show a composition bias toward basic and acidic residues. A compositionally biased stretch (polar residues) spans 484 to 499 (VSYSSSFSKSREQQGA). The span at 559–570 (HSQDALGKKDFQ) shows a compositional bias: basic and acidic residues. Residues 639–699 (NWKAGDQCLA…KPLHMDDDED (61 aa)) form the Tudor domain. The segment covering 706–716 (LEFRRGGDGQP) has biased composition (basic and acidic residues). Residues 706–733 (LEFRRGGDGQPRRSRPTQQYYQPPRARD) are disordered.

As to quaternary structure, component of mRNA stress granules.

It is found in the cytoplasm. It localises to the nucleus. Its function is as follows. Scaffolding protein that specifically recognizes and binds dimethylarginine-containing proteins. Plays a role in the regulation of translation of target mRNAs by binding Arg/Gly-rich motifs (GAR) in dimethylarginine-containing proteins. In nucleus, acts as a coactivator: recognizes and binds asymmetric dimethylation on the core histone tails associated with transcriptional activation (H3R17me2a and H4R3me2a) and recruits proteins at these arginine-methylated loci. In cytoplasm, acts as an antiviral factor that participates in the assembly of stress granules together with G3BP1. The sequence is that of Tudor domain-containing protein 3 (tdrd3) from Danio rerio (Zebrafish).